Reading from the N-terminus, the 358-residue chain is Phosphoserine aminotransferase (358 aa).

Arg41 is a binding site for L-glutamate. Pyridoxal 5'-phosphate is bound by residues 75-76 (AS), Trp100, Thr148, Asp167, and Gln190. Lys191 is modified (N6-(pyridoxal phosphate)lysine). 233 to 234 (NT) is a binding site for pyridoxal 5'-phosphate.

The protein belongs to the class-V pyridoxal-phosphate-dependent aminotransferase family. SerC subfamily. As to quaternary structure, homodimer. Pyridoxal 5'-phosphate is required as a cofactor.

The protein resides in the cytoplasm. The catalysed reaction is O-phospho-L-serine + 2-oxoglutarate = 3-phosphooxypyruvate + L-glutamate. It carries out the reaction 4-(phosphooxy)-L-threonine + 2-oxoglutarate = (R)-3-hydroxy-2-oxo-4-phosphooxybutanoate + L-glutamate. It functions in the pathway amino-acid biosynthesis; L-serine biosynthesis; L-serine from 3-phospho-D-glycerate: step 2/3. Its pathway is cofactor biosynthesis; pyridoxine 5'-phosphate biosynthesis; pyridoxine 5'-phosphate from D-erythrose 4-phosphate: step 3/5. Its function is as follows. Catalyzes the reversible conversion of 3-phosphohydroxypyruvate to phosphoserine and of 3-hydroxy-2-oxo-4-phosphonooxybutanoate to phosphohydroxythreonine. This is Phosphoserine aminotransferase from Campylobacter jejuni (strain RM1221).